The primary structure comprises 98 residues: NADH-ubiquinone oxidoreductase chain 4L (98 aa).

3 consecutive transmembrane segments (helical) span residues 1–21 (MSIVYINIFLAFIMSLLGMLI), 29–49 (SLLCLEGMMLSLFVMITLIIL), and 61–81 (IILLVFAACEAALGLSLLVMV).

Belongs to the complex I subunit 4L family. Core subunit of respiratory chain NADH dehydrogenase (Complex I) which is composed of 45 different subunits.

The protein localises to the mitochondrion inner membrane. The enzyme catalyses a ubiquinone + NADH + 5 H(+)(in) = a ubiquinol + NAD(+) + 4 H(+)(out). Its function is as follows. Core subunit of the mitochondrial membrane respiratory chain NADH dehydrogenase (Complex I) which catalyzes electron transfer from NADH through the respiratory chain, using ubiquinone as an electron acceptor. Part of the enzyme membrane arm which is embedded in the lipid bilayer and involved in proton translocation. The chain is NADH-ubiquinone oxidoreductase chain 4L (MT-ND4L) from Herpestes javanicus (Small Indian mongoose).